Consider the following 1368-residue polypeptide: DNA-directed RNA polymerase subunit beta (1368 aa).

It belongs to the RNA polymerase beta chain family. The RNAP catalytic core consists of 2 alpha, 1 beta, 1 beta' and 1 omega subunit. When a sigma factor is associated with the core the holoenzyme is formed, which can initiate transcription.

It carries out the reaction RNA(n) + a ribonucleoside 5'-triphosphate = RNA(n+1) + diphosphate. DNA-dependent RNA polymerase catalyzes the transcription of DNA into RNA using the four ribonucleoside triphosphates as substrates. The chain is DNA-directed RNA polymerase subunit beta from Cupriavidus pinatubonensis (strain JMP 134 / LMG 1197) (Cupriavidus necator (strain JMP 134)).